We begin with the raw amino-acid sequence, 88 residues long: Small ribosomal subunit protein bS18 (88 aa).

The tract at residues methionine 1–valine 22 is disordered.

It belongs to the bacterial ribosomal protein bS18 family. In terms of assembly, part of the 30S ribosomal subunit. Forms a tight heterodimer with protein bS6.

Its function is as follows. Binds as a heterodimer with protein bS6 to the central domain of the 16S rRNA, where it helps stabilize the platform of the 30S subunit. In Thermus thermophilus (strain ATCC BAA-163 / DSM 7039 / HB27), this protein is Small ribosomal subunit protein bS18 (rpsR).